The chain runs to 452 residues: Phosphoglucosamine mutase (452 aa).

Ser104 (phosphoserine intermediate) is an active-site residue. Mg(2+)-binding residues include Ser104, Asp246, Asp248, and Asp250. Ser104 carries the phosphoserine modification.

This sequence belongs to the phosphohexose mutase family. Requires Mg(2+) as cofactor. Activated by phosphorylation.

It carries out the reaction alpha-D-glucosamine 1-phosphate = D-glucosamine 6-phosphate. Its function is as follows. Catalyzes the conversion of glucosamine-6-phosphate to glucosamine-1-phosphate. The chain is Phosphoglucosamine mutase from Streptomyces avermitilis (strain ATCC 31267 / DSM 46492 / JCM 5070 / NBRC 14893 / NCIMB 12804 / NRRL 8165 / MA-4680).